The sequence spans 286 residues: CLA biosynthesis dehydrogenase/reductase (286 aa).

Asp37, Asp63, Val64, Asn90, Tyr156, and Lys160 together coordinate NAD(+). The Proton acceptor role is filled by Tyr156.

It belongs to the short-chain dehydrogenases/reductases (SDR) family.

The protein resides in the cytoplasm. It carries out the reaction (10S)-hydroxy-(12Z)-octadecenoate + NAD(+) = 10-oxo-(12Z)-octadecenoate + NADH + H(+). It catalyses the reaction 10-oxo-(11E)-octadecenoate + NADH + H(+) = 10-hydroxy-(11E)-octadecenoate + NAD(+). The catalysed reaction is 10-oxooctadecanoate + NADH + H(+) = 10-hydroxyoctadecanoate + NAD(+). It functions in the pathway lipid metabolism; fatty acid metabolism. Is involved in a saturation metabolic pathway of polyunsaturated fatty acids, that detoxifies unsaturated fatty acids and generates hydroxy fatty acids, oxo fatty acids, conjugated fatty acids such as conjugated linoleic acids (CLAs), and partially saturated trans-fatty acids as intermediates. CLA-DH catalyzes the dehydrogenation/reduction steps in the production of 10-oxo-(12Z)-octadecenoate, 10-hydroxy-(11E)-octadecenoate and 10-hydroxyoctadecanoate during linoleate metabolism. As part of the gut microbiome, this enzyme modifies host fatty acid composition and is expected to improve human health by altering lipid metabolism related to the onset of metabolic syndrome. This Lactiplantibacillus plantarum (Lactobacillus plantarum) protein is CLA biosynthesis dehydrogenase/reductase.